The following is a 244-amino-acid chain: 5-oxoprolinase subunit A (244 aa).

It belongs to the LamB/PxpA family. As to quaternary structure, forms a complex composed of PxpA, PxpB and PxpC.

It catalyses the reaction 5-oxo-L-proline + ATP + 2 H2O = L-glutamate + ADP + phosphate + H(+). In terms of biological role, catalyzes the cleavage of 5-oxoproline to form L-glutamate coupled to the hydrolysis of ATP to ADP and inorganic phosphate. The protein is 5-oxoprolinase subunit A of Salmonella heidelberg (strain SL476).